The primary structure comprises 37 residues: Large ribosomal subunit protein bL36 (37 aa).

Belongs to the bacterial ribosomal protein bL36 family.

The sequence is that of Large ribosomal subunit protein bL36 from Helicobacter pylori (strain ATCC 700392 / 26695) (Campylobacter pylori).